The chain runs to 203 residues: Endo-type membrane-bound lytic murein transglycosylase A (203 aa).

The signal sequence occupies residues 1–15 (MKLRWFAFLIVLLAG). Cysteine 16 carries N-palmitoyl cysteine lipidation. A lipid anchor (S-diacylglycerol cysteine) is attached at cysteine 16.

This sequence belongs to the transglycosylase Slt family.

The protein localises to the cell outer membrane. It carries out the reaction Endolytic cleavage of the (1-&gt;4)-beta-glycosidic linkage between N-acetylmuramic acid (MurNAc) and N-acetylglucosamine (GlcNAc) residues in peptidoglycan with concomitant formation of a 1,6-anhydrobond in the MurNAc residue.. Murein-degrading enzyme. May play a role in recycling of muropeptides during cell elongation and/or cell division. Preferentially cleaves at a distance of more than two disaccharide units from the ends of the glycan chain. This chain is Endo-type membrane-bound lytic murein transglycosylase A, found in Escherichia coli O127:H6 (strain E2348/69 / EPEC).